The sequence spans 204 residues: 3-isopropylmalate dehydratase small subunit (204 aa).

Belongs to the LeuD family. LeuD type 1 subfamily. Heterodimer of LeuC and LeuD.

The catalysed reaction is (2R,3S)-3-isopropylmalate = (2S)-2-isopropylmalate. Its pathway is amino-acid biosynthesis; L-leucine biosynthesis; L-leucine from 3-methyl-2-oxobutanoate: step 2/4. In terms of biological role, catalyzes the isomerization between 2-isopropylmalate and 3-isopropylmalate, via the formation of 2-isopropylmaleate. This Roseiflexus sp. (strain RS-1) protein is 3-isopropylmalate dehydratase small subunit.